The chain runs to 184 residues: MELDYLLATAMFLIVCVYVISETVNLHSVYDIEEAKKEFLMYYNDLKYNYSISKGDLIFNFKVNKIGYVIEGFVFKDTSESRELIKYLENLNGSYIIAYSPSKDEFIITKNHEFLRIIGHYNISAKYKKGEYGDIEIIYPKNYSINYREFQGISCNKLFEVPFYIVDKNENITLKYYGILEVGR.

A helical membrane pass occupies residues 5–27 (YLLATAMFLIVCVYVISETVNLH).

It localises to the membrane. This is an uncharacterized protein from Methanocaldococcus jannaschii (strain ATCC 43067 / DSM 2661 / JAL-1 / JCM 10045 / NBRC 100440) (Methanococcus jannaschii).